The following is an 849-amino-acid chain: Serrate RNA effector molecule homolog A (849 aa).

2 disordered regions span residues 1–90 and 276–409; these read MADS…HGSD and KREA…PRPL. 3 stretches are compositionally biased toward basic and acidic residues: residues 8 to 73, 276 to 306, and 314 to 342; these read YDRR…RHDL, KREAAKKEEAPVTETEKVVTEEKEAPAKPEN, and EKPVKPQEEEEKKVEKKVEKEEPERETRK. The segment covering 354–364 has biased composition (acidic residues); sequence SDDGSDSESDT. The segment covering 381–405 has biased composition (basic and acidic residues); the sequence is RAEETPKKEEDTEKQKEKQKEDTVK.

This sequence belongs to the ARS2 family. As to quaternary structure, interacts ncbp1/cbp80.

The protein localises to the nucleus. It localises to the nucleoplasm. Its subcellular location is the cytoplasm. In terms of biological role, acts as a mediator between the cap-binding complex (CBC) and the primary microRNAs (miRNAs) processing machinery during cell proliferation. Contributes to the stability and delivery of capped primary miRNA transcripts to the primary miRNA processing complex, thereby playing a role in RNA-mediated gene silencing (RNAi) by miRNAs. This chain is Serrate RNA effector molecule homolog A (srrt-a), found in Xenopus laevis (African clawed frog).